A 111-amino-acid chain; its full sequence is Flagellar hook-basal body complex protein FliE (111 aa).

Belongs to the FliE family.

It localises to the bacterial flagellum basal body. This Brucella abortus (strain S19) protein is Flagellar hook-basal body complex protein FliE.